Here is a 582-residue protein sequence, read N- to C-terminus: uncharacterized protein (582 aa).

A compositionally biased stretch (basic and acidic residues) spans 1-23; it reads MAHEGSRQVRDRGVTRSKAEKVR. Disordered stretches follow at residues 1 to 29, 110 to 133, and 147 to 221; these read MAHE…TVPV, AVAE…SWAQ, and LENF…SSAG. Ser-242 bears the Phosphoserine mark. Disordered stretches follow at residues 310–331 and 551–582; these read RPSA…SAHH and LSSG…PKPR. Residues 311 to 320 are compositionally biased toward polar residues; that stretch reads PSASCQQQRA.

This is an uncharacterized protein from Homo sapiens (Human).